Reading from the N-terminus, the 130-residue chain is Small ribosomal subunit protein uS9 (130 aa).

The protein belongs to the universal ribosomal protein uS9 family.

This Shewanella piezotolerans (strain WP3 / JCM 13877) protein is Small ribosomal subunit protein uS9.